The primary structure comprises 285 residues: Shikimate dehydrogenase (NADP(+)) (285 aa).

Shikimate is bound by residues 20 to 22 (SRS) and Thr-67. Residue Lys-71 is the Proton acceptor of the active site. Shikimate-binding residues include Asn-93 and Asp-108. NADP(+) is bound by residues 132 to 136 (GAGGA) and Met-224. Tyr-226 is a binding site for shikimate. Gly-248 is a binding site for NADP(+).

This sequence belongs to the shikimate dehydrogenase family. Homodimer.

The catalysed reaction is shikimate + NADP(+) = 3-dehydroshikimate + NADPH + H(+). It functions in the pathway metabolic intermediate biosynthesis; chorismate biosynthesis; chorismate from D-erythrose 4-phosphate and phosphoenolpyruvate: step 4/7. Involved in the biosynthesis of the chorismate, which leads to the biosynthesis of aromatic amino acids. Catalyzes the reversible NADPH linked reduction of 3-dehydroshikimate (DHSA) to yield shikimate (SA). The chain is Shikimate dehydrogenase (NADP(+)) from Bordetella avium (strain 197N).